Reading from the N-terminus, the 630-residue chain is Arginine--tRNA ligase (630 aa).

Positions 120-130 match the 'HIGH' region motif; that stretch reads ANPVHPLHIGH.

Belongs to the class-I aminoacyl-tRNA synthetase family.

The protein resides in the cytoplasm. The enzyme catalyses tRNA(Arg) + L-arginine + ATP = L-arginyl-tRNA(Arg) + AMP + diphosphate. The polypeptide is Arginine--tRNA ligase (Pyrobaculum aerophilum (strain ATCC 51768 / DSM 7523 / JCM 9630 / CIP 104966 / NBRC 100827 / IM2)).